Here is a 289-residue protein sequence, read N- to C-terminus: 2-hydroxy-6-oxononadienedioate/2-hydroxy-6-oxononatrienedioate hydrolase 1 (289 aa).

Positions 39–275 constitute an AB hydrolase-1 domain; it reads TVVMLHGSGP…RCGHWAQWEH (237 aa). H269 acts as the Proton acceptor in catalysis.

The protein belongs to the AB hydrolase superfamily. MhpC family. In terms of assembly, homodimer.

It carries out the reaction (2Z,4E)-2-hydroxy-6-oxonona-2,4-dienedioate + H2O = (2Z)-2-hydroxypenta-2,4-dienoate + succinate + H(+). It catalyses the reaction (2Z,4E,7E)-2-hydroxy-6-oxonona-2,4,7-trienedioate + H2O = (2Z)-2-hydroxypenta-2,4-dienoate + fumarate + H(+). It functions in the pathway aromatic compound metabolism; 3-phenylpropanoate degradation. Its function is as follows. Catalyzes the cleavage of the C5-C6 bond of 2-hydroxy-6-oxononadienedioate and 2-hydroxy-6-oxononatrienedioate, a dienol ring fission product of the bacterial meta-cleavage pathway for degradation of phenylpropionic acid. This Dechloromonas aromatica (strain RCB) protein is 2-hydroxy-6-oxononadienedioate/2-hydroxy-6-oxononatrienedioate hydrolase 1.